Consider the following 523-residue polypeptide: 2-isopropylmalate synthase (523 aa).

A Pyruvate carboxyltransferase domain is found at 5–267 (VVIFDTTLRD…QTRINHNEIW (263 aa)). Mn(2+)-binding residues include aspartate 14, histidine 202, histidine 204, and asparagine 238. The regulatory domain stretch occupies residues 392–523 (RMDYFSVQSG…QNKENNKETV (132 aa)).

Belongs to the alpha-IPM synthase/homocitrate synthase family. LeuA type 1 subfamily. In terms of assembly, homodimer. The cofactor is Mn(2+).

It localises to the cytoplasm. The catalysed reaction is 3-methyl-2-oxobutanoate + acetyl-CoA + H2O = (2S)-2-isopropylmalate + CoA + H(+). It participates in amino-acid biosynthesis; L-leucine biosynthesis; L-leucine from 3-methyl-2-oxobutanoate: step 1/4. Catalyzes the condensation of the acetyl group of acetyl-CoA with 3-methyl-2-oxobutanoate (2-ketoisovalerate) to form 3-carboxy-3-hydroxy-4-methylpentanoate (2-isopropylmalate). This Enterobacter sp. (strain 638) protein is 2-isopropylmalate synthase.